The primary structure comprises 318 residues: MNGDHMVLGSSVTDQKAIILVIILLLLCLVAIAGNGFITAALGVEWVLRGTLLPCDKLLVSLRASRFCLQWVVMGKTIYVLLYPTAFPYNPVLQFLAFQWDFLNAATLWFSSWLSVFYCVKIATFTHPVFLWLKHKLSEWVPWMFFSSVGLSSFTTILFFIGNHSIYQNYLRNHLQPWNVTGNSIWSYCEKFYLFPVKMITWTMPTAVFFICMILLITSLGRHMEKALLTTSGFREPSVQAHVKALLALLSLAMLFISYFLSLVLSAAGIFPPLDFKFWVGESVIYLCAGVHPIILLFSNRRLRAVLERCRSSRCRTP.

Over 1-7 (MNGDHMV) the chain is Extracellular. A helical transmembrane segment spans residues 8 to 28 (LGSSVTDQKAIILVIILLLLC). The Cytoplasmic portion of the chain corresponds to 29–40 (LVAIAGNGFITA). Residues 41-61 (ALGVEWVLRGTLLPCDKLLVS) traverse the membrane as a helical segment. The Extracellular segment spans residues 62–88 (LRASRFCLQWVVMGKTIYVLLYPTAFP). Residues 89–109 (YNPVLQFLAFQWDFLNAATLW) traverse the membrane as a helical segment. Residues 110-128 (FSSWLSVFYCVKIATFTHP) are Cytoplasmic-facing. Residues 129–149 (VFLWLKHKLSEWVPWMFFSSV) traverse the membrane as a helical segment. Topologically, residues 150–183 (GLSSFTTILFFIGNHSIYQNYLRNHLQPWNVTGN) are extracellular. N-linked (GlcNAc...) asparagine glycosylation is found at N163 and N179. A helical transmembrane segment spans residues 184-204 (SIWSYCEKFYLFPVKMITWTM). Residues 205 to 234 (PTAVFFICMILLITSLGRHMEKALLTTSGF) are Cytoplasmic-facing. The chain crosses the membrane as a helical span at residues 235–255 (REPSVQAHVKALLALLSLAML). At 256–264 (FISYFLSLV) the chain is on the extracellular side. Residues 265-285 (LSAAGIFPPLDFKFWVGESVI) form a helical membrane-spanning segment. Over 286–318 (YLCAGVHPIILLFSNRRLRAVLERCRSSRCRTP) the chain is Cytoplasmic.

Belongs to the G-protein coupled receptor T2R family.

Its subcellular location is the membrane. Its function is as follows. Receptor that may play a role in the perception of bitterness and is gustducin-linked. May play a role in sensing the chemical composition of the gastrointestinal content. The activity of this receptor may stimulate alpha gustducin, mediate PLC-beta-2 activation and lead to the gating of TRPM5. The polypeptide is Taste receptor type 2 member 60 (TAS2R60) (Macaca mulatta (Rhesus macaque)).